Consider the following 333-residue polypeptide: DNA-directed RNA polymerase subunit alpha (333 aa).

Positions 1–234 (MQSSVNEFLT…QQLAAFVDLK (234 aa)) are alpha N-terminal domain (alpha-NTD). The segment at 248-333 (IDPILLRPVD…SLKKDDKATA (86 aa)) is alpha C-terminal domain (alpha-CTD).

Belongs to the RNA polymerase alpha chain family. In terms of assembly, homodimer. The RNAP catalytic core consists of 2 alpha, 1 beta, 1 beta' and 1 omega subunit. When a sigma factor is associated with the core the holoenzyme is formed, which can initiate transcription.

It carries out the reaction RNA(n) + a ribonucleoside 5'-triphosphate = RNA(n+1) + diphosphate. DNA-dependent RNA polymerase catalyzes the transcription of DNA into RNA using the four ribonucleoside triphosphates as substrates. The sequence is that of DNA-directed RNA polymerase subunit alpha from Pseudomonas aeruginosa (strain UCBPP-PA14).